The primary structure comprises 57 residues: UPF0509 protein YciZ (57 aa).

The protein belongs to the UPF0509 family.

This chain is UPF0509 protein YciZ (yciZ), found in Shigella flexneri.